A 356-amino-acid chain; its full sequence is Protein pelota homolog (356 aa).

Belongs to the eukaryotic release factor 1 family. Pelota subfamily. As to quaternary structure, monomer. A divalent metal cation is required as a cofactor.

The protein resides in the cytoplasm. Its function is as follows. May function in recognizing stalled ribosomes, interact with stem-loop structures in stalled mRNA molecules, and effect endonucleolytic cleavage of the mRNA. May play a role in the release non-functional ribosomes and degradation of damaged mRNAs. Has endoribonuclease activity. This Staphylothermus marinus (strain ATCC 43588 / DSM 3639 / JCM 9404 / F1) protein is Protein pelota homolog.